A 213-amino-acid polypeptide reads, in one-letter code: Lysozyme g-like protein 2 (213 aa).

Residues 1-19 form the signal peptide; it reads MVPSVVFWGLIALVGTAKG. 2 cysteine pairs are disulfide-bonded: cysteine 40–cysteine 93 and cysteine 54–cysteine 62. The active site involves glutamate 106.

Belongs to the glycosyl hydrolase 23 family.

Its subcellular location is the secreted. In terms of biological role, may act as a potent antibacterial protein that may play a role in the innate immunity. The sequence is that of Lysozyme g-like protein 2 (Lyg2) from Mus musculus (Mouse).